Reading from the N-terminus, the 122-residue chain is Large ribosomal subunit protein uL14 (122 aa).

This sequence belongs to the universal ribosomal protein uL14 family. In terms of assembly, part of the 50S ribosomal subunit. Forms a cluster with proteins L3 and L19. In the 70S ribosome, L14 and L19 interact and together make contacts with the 16S rRNA in bridges B5 and B8.

In terms of biological role, binds to 23S rRNA. Forms part of two intersubunit bridges in the 70S ribosome. The sequence is that of Large ribosomal subunit protein uL14 from Latilactobacillus sakei subsp. sakei (strain 23K) (Lactobacillus sakei subsp. sakei).